A 116-amino-acid chain; its full sequence is UPF0102 protein IL0423 (116 aa).

Belongs to the UPF0102 family.

The chain is UPF0102 protein IL0423 from Idiomarina loihiensis (strain ATCC BAA-735 / DSM 15497 / L2-TR).